Consider the following 441-residue polypeptide: Protein dcd1A (441 aa).

An N-terminal signal peptide occupies residues 1 to 23 (MKIFNKLIFLIIQCILIISVTNA). 4 N-linked (GlcNAc...) asparagine glycosylation sites follow: Asn45, Asn261, Asn308, and Asn419.

The protein localises to the secreted. In Dictyostelium discoideum (Social amoeba), this protein is Protein dcd1A (dcd1A).